A 203-amino-acid polypeptide reads, in one-letter code: Urease accessory protein UreG (203 aa).

11–18 contacts GTP; that stretch reads GPVGSGKT.

This sequence belongs to the SIMIBI class G3E GTPase family. UreG subfamily. Homodimer. UreD, UreF and UreG form a complex that acts as a GTP-hydrolysis-dependent molecular chaperone, activating the urease apoprotein by helping to assemble the nickel containing metallocenter of UreC. The UreE protein probably delivers the nickel.

The protein localises to the cytoplasm. Its function is as follows. Facilitates the functional incorporation of the urease nickel metallocenter. This process requires GTP hydrolysis, probably effectuated by UreG. This chain is Urease accessory protein UreG, found in Prochlorococcus marinus (strain AS9601).